The following is a 316-amino-acid chain: Carbamate kinase-like protein YahI (316 aa).

This sequence belongs to the carbamate kinase family.

This Escherichia coli (strain K12) protein is Carbamate kinase-like protein YahI (yahI).